A 436-amino-acid polypeptide reads, in one-letter code: 3-ketoacyl-CoA thiolase (436 aa).

Cys99 functions as the Acyl-thioester intermediate in the catalytic mechanism. Catalysis depends on proton acceptor residues His392 and Cys422.

This sequence belongs to the thiolase-like superfamily. Thiolase family. Heterotetramer of two alpha chains (FadJ) and two beta chains (FadI).

It is found in the cytoplasm. The enzyme catalyses an acyl-CoA + acetyl-CoA = a 3-oxoacyl-CoA + CoA. It functions in the pathway lipid metabolism; fatty acid beta-oxidation. Functionally, catalyzes the final step of fatty acid oxidation in which acetyl-CoA is released and the CoA ester of a fatty acid two carbons shorter is formed. The chain is 3-ketoacyl-CoA thiolase from Salmonella typhimurium (strain LT2 / SGSC1412 / ATCC 700720).